Reading from the N-terminus, the 344-residue chain is Zinc metalloproteinase nas-6 (344 aa).

The N-terminal stretch at 1-19 (MLDHVLLLTYCLVSTVVRS) is a signal peptide. One can recognise a Peptidase M12A domain in the interval 72–266 (NALKNKQLTW…VKINKLYSCK (195 aa)). Intrachain disulfides connect C114-C265, C135-C154, C300-C334, C307-C327, and C314-C331. H162 is a binding site for Zn(2+). E163 is an active-site residue. Zn(2+) is bound by residues H166 and H172. A ShKT domain is found at 300-334 (CVDHFADCPHFAQYCTRASFFFVMKSYCPFTCKHC).

Requires Zn(2+) as cofactor. In terms of tissue distribution, expressed in pharyngeal and body wall muscles, intestine, hypodermis and pharyngeal mc2 cells.

It is found in the secreted. Its function is as follows. Metalloprotease. In Caenorhabditis elegans, this protein is Zinc metalloproteinase nas-6 (nas-6).